Here is a 134-residue protein sequence, read N- to C-terminus: Large ribosomal subunit protein uL22 (134 aa).

The protein belongs to the universal ribosomal protein uL22 family. In terms of assembly, part of the 50S ribosomal subunit.

Functionally, this protein binds specifically to 23S rRNA; its binding is stimulated by other ribosomal proteins, e.g. L4, L17, and L20. It is important during the early stages of 50S assembly. It makes multiple contacts with different domains of the 23S rRNA in the assembled 50S subunit and ribosome. In terms of biological role, the globular domain of the protein is located near the polypeptide exit tunnel on the outside of the subunit, while an extended beta-hairpin is found that lines the wall of the exit tunnel in the center of the 70S ribosome. This Gluconacetobacter diazotrophicus (strain ATCC 49037 / DSM 5601 / CCUG 37298 / CIP 103539 / LMG 7603 / PAl5) protein is Large ribosomal subunit protein uL22.